Reading from the N-terminus, the 1161-residue chain is DNA-directed RNA polymerase subunit beta (1161 aa).

Belongs to the RNA polymerase beta chain family. As to quaternary structure, the RNAP catalytic core consists of 2 alpha, 1 beta, 1 beta' and 1 omega subunit. When a sigma factor is associated with the core the holoenzyme is formed, which can initiate transcription.

The enzyme catalyses RNA(n) + a ribonucleoside 5'-triphosphate = RNA(n+1) + diphosphate. DNA-dependent RNA polymerase catalyzes the transcription of DNA into RNA using the four ribonucleoside triphosphates as substrates. The chain is DNA-directed RNA polymerase subunit beta from Streptomyces avermitilis (strain ATCC 31267 / DSM 46492 / JCM 5070 / NBRC 14893 / NCIMB 12804 / NRRL 8165 / MA-4680).